The chain runs to 744 residues: Catalase A (744 aa).

Catalysis depends on residues H93 and N166. A heme-binding site is contributed by Y380.

This sequence belongs to the catalase family. Heme is required as a cofactor.

It localises to the peroxisome matrix. It carries out the reaction 2 H2O2 = O2 + 2 H2O. In terms of biological role, catalyzes the degradation of hydrogen peroxide (H(2)O(2)) generated by peroxisomal oxidases to water and oxygen, thereby protecting cells from the toxic effects of hydrogen peroxide. This is Catalase A (catA) from Emericella nidulans (strain FGSC A4 / ATCC 38163 / CBS 112.46 / NRRL 194 / M139) (Aspergillus nidulans).